We begin with the raw amino-acid sequence, 351 residues long: Glycerol-1-phosphate dehydrogenase [NAD(P)+] (351 aa).

Residues 97 to 101 (GKVID) and 119 to 122 (TSPS) each bind NAD(+). Substrate is bound at residue Asp-124. Ser-128 is a binding site for NAD(+). Asp-171 serves as a coordination point for substrate. Zn(2+) is bound by residues Asp-171 and His-251. His-255 is a substrate binding site. His-267 provides a ligand contact to Zn(2+).

Belongs to the glycerol-1-phosphate dehydrogenase family. As to quaternary structure, homodimer. It depends on Zn(2+) as a cofactor.

Its subcellular location is the cytoplasm. The enzyme catalyses sn-glycerol 1-phosphate + NAD(+) = dihydroxyacetone phosphate + NADH + H(+). The catalysed reaction is sn-glycerol 1-phosphate + NADP(+) = dihydroxyacetone phosphate + NADPH + H(+). The protein operates within membrane lipid metabolism; glycerophospholipid metabolism. Its function is as follows. Catalyzes the NAD(P)H-dependent reduction of dihydroxyacetonephosphate (DHAP or glycerone phosphate) to glycerol 1-phosphate (G1P). The G1P thus generated is used as the glycerophosphate backbone of phospholipids in the cellular membranes of Archaea. This is Glycerol-1-phosphate dehydrogenase [NAD(P)+] from Saccharolobus islandicus (strain L.S.2.15 / Lassen #1) (Sulfolobus islandicus).